Reading from the N-terminus, the 316-residue chain is MATLSDVAKKANVSKMTVSRVINHPETVTDELKKLVHSAMKELNYIPNYAARALVQNRTQVVKLLILEEMDTTEPYYMNLLTGISRELDRNHYALQLVTRNSLNIGQCDGIIATGLRKNDFEGVIKAFEKPLVVFGQNEMGYDFIDVNNEKGTFMATRHVMGLGEREVVFFGIDLDEPFERAREQGYIRAMNKSFKKSNMFRIDNSSKKSECLARELLKSMDNQAAFVCASDRIALGVIRAAQSLGKRIPEDVAVTGNDGVFLDRISSPRLTTVRQPVVEMGEACAKMLLKKMNEDGAAQGSLFFEPELIVRESTL.

Residues 1-56 (MATLSDVAKKANVSKMTVSRVINHPETVTDELKKLVHSAMKELNYIPNYAARALVQ) enclose the HTH lacI-type domain. A DNA-binding region (H-T-H motif) is located at residues 4–23 (LSDVAKKANVSKMTVSRVIN).

This is an uncharacterized protein from Bacillus subtilis (strain 168).